Consider the following 564-residue polypeptide: Dihydroxy-acid dehydratase (564 aa).

Aspartate 80 is a Mg(2+) binding site. Cysteine 121 contacts [2Fe-2S] cluster. Positions 122 and 123 each coordinate Mg(2+). Residue lysine 123 is modified to N6-carboxylysine. Cysteine 194 is a [2Fe-2S] cluster binding site. Glutamate 447 contacts Mg(2+). The Proton acceptor role is filled by serine 473.

Belongs to the IlvD/Edd family. Homodimer. The cofactor is [2Fe-2S] cluster. Requires Mg(2+) as cofactor.

It catalyses the reaction (2R)-2,3-dihydroxy-3-methylbutanoate = 3-methyl-2-oxobutanoate + H2O. The catalysed reaction is (2R,3R)-2,3-dihydroxy-3-methylpentanoate = (S)-3-methyl-2-oxopentanoate + H2O. The protein operates within amino-acid biosynthesis; L-isoleucine biosynthesis; L-isoleucine from 2-oxobutanoate: step 3/4. It participates in amino-acid biosynthesis; L-valine biosynthesis; L-valine from pyruvate: step 3/4. In terms of biological role, functions in the biosynthesis of branched-chain amino acids. Catalyzes the dehydration of (2R,3R)-2,3-dihydroxy-3-methylpentanoate (2,3-dihydroxy-3-methylvalerate) into 2-oxo-3-methylpentanoate (2-oxo-3-methylvalerate) and of (2R)-2,3-dihydroxy-3-methylbutanoate (2,3-dihydroxyisovalerate) into 2-oxo-3-methylbutanoate (2-oxoisovalerate), the penultimate precursor to L-isoleucine and L-valine, respectively. The sequence is that of Dihydroxy-acid dehydratase from Listeria innocua serovar 6a (strain ATCC BAA-680 / CLIP 11262).